Reading from the N-terminus, the 101-residue chain is DNA-binding protein Fis (101 aa).

Positions 77-96 (QTRAANMLGINRGTLRKKLK) form a DNA-binding region, H-T-H motif.

Belongs to the transcriptional regulatory Fis family. Homodimer.

Functionally, activates ribosomal RNA transcription. Plays a direct role in upstream activation of rRNA promoters. The chain is DNA-binding protein Fis from Shewanella frigidimarina (strain NCIMB 400).